A 516-amino-acid chain; its full sequence is Anthranilate synthase component 1 (516 aa).

Residues S56 and 283-285 (PYM) contribute to the L-tryptophan site. 324–325 (GT) is a binding site for chorismate. E351 contacts Mg(2+). Chorismate-binding positions include Y439, R459, 473-475 (GGG), and G475. E488 is a binding site for Mg(2+).

This sequence belongs to the anthranilate synthase component I family. As to quaternary structure, heterotetramer consisting of two non-identical subunits: a beta subunit (TrpG) and a large alpha subunit (TrpE). The cofactor is Mg(2+).

It carries out the reaction chorismate + L-glutamine = anthranilate + pyruvate + L-glutamate + H(+). It functions in the pathway amino-acid biosynthesis; L-tryptophan biosynthesis; L-tryptophan from chorismate: step 1/5. Its activity is regulated as follows. Feedback inhibited by tryptophan. Part of a heterotetrameric complex that catalyzes the two-step biosynthesis of anthranilate, an intermediate in the biosynthesis of L-tryptophan. In the first step, the glutamine-binding beta subunit (TrpG) of anthranilate synthase (AS) provides the glutamine amidotransferase activity which generates ammonia as a substrate that, along with chorismate, is used in the second step, catalyzed by the large alpha subunit of AS (TrpE) to produce anthranilate. In the absence of TrpG, TrpE can synthesize anthranilate directly from chorismate and high concentrations of ammonia. In Mycobacterium bovis (strain ATCC BAA-935 / AF2122/97), this protein is Anthranilate synthase component 1 (trpE).